Here is a 315-residue protein sequence, read N- to C-terminus: Methionyl-tRNA formyltransferase (315 aa).

113–116 (SILP) is a binding site for (6S)-5,6,7,8-tetrahydrofolate.

This sequence belongs to the Fmt family.

It carries out the reaction L-methionyl-tRNA(fMet) + (6R)-10-formyltetrahydrofolate = N-formyl-L-methionyl-tRNA(fMet) + (6S)-5,6,7,8-tetrahydrofolate + H(+). In terms of biological role, attaches a formyl group to the free amino group of methionyl-tRNA(fMet). The formyl group appears to play a dual role in the initiator identity of N-formylmethionyl-tRNA by promoting its recognition by IF2 and preventing the misappropriation of this tRNA by the elongation apparatus. The polypeptide is Methionyl-tRNA formyltransferase (Vibrio parahaemolyticus serotype O3:K6 (strain RIMD 2210633)).